The following is a 153-amino-acid chain: Lipoprotein signal peptidase (153 aa).

2 consecutive transmembrane segments (helical) span residues 52 to 72 (ILAG…IGIV) and 81 to 101 (GQML…GNFI). Catalysis depends on residues Asp-111 and Asp-129. A helical membrane pass occupies residues 124–144 (IFNIADSSLCVGVILLFIHML).

This sequence belongs to the peptidase A8 family.

Its subcellular location is the cell membrane. It carries out the reaction Release of signal peptides from bacterial membrane prolipoproteins. Hydrolyzes -Xaa-Yaa-Zaa-|-(S,diacylglyceryl)Cys-, in which Xaa is hydrophobic (preferably Leu), and Yaa (Ala or Ser) and Zaa (Gly or Ala) have small, neutral side chains.. The protein operates within protein modification; lipoprotein biosynthesis (signal peptide cleavage). Its function is as follows. This protein specifically catalyzes the removal of signal peptides from prolipoproteins. In Bacillus velezensis (strain DSM 23117 / BGSC 10A6 / LMG 26770 / FZB42) (Bacillus amyloliquefaciens subsp. plantarum), this protein is Lipoprotein signal peptidase.